We begin with the raw amino-acid sequence, 41 residues long: Photosystem I reaction center subunit IX (41 aa).

A helical membrane pass occupies residues 7-27 (YLSVAPVLSTLWFGALAGLLI).

Belongs to the PsaJ family.

Its subcellular location is the plastid. It is found in the chloroplast thylakoid membrane. In terms of biological role, may help in the organization of the PsaE and PsaF subunits. The chain is Photosystem I reaction center subunit IX from Jasminum nudiflorum (Winter jasmine).